Consider the following 525-residue polypeptide: Ent-kaurene oxidase (525 aa).

A helical membrane pass occupies residues 31-51; sequence VHWLIYVAFGAWLCSYVIHVL. Cys466 contacts heme.

The protein belongs to the cytochrome P450 family. It depends on heme as a cofactor.

The protein localises to the membrane. The catalysed reaction is ent-kaur-16-ene + 3 reduced [NADPH--hemoprotein reductase] + 3 O2 = ent-kaur-16-en-19-oate + 3 oxidized [NADPH--hemoprotein reductase] + 4 H2O + 4 H(+). Its pathway is plant hormone biosynthesis; gibberellin biosynthesis. In terms of biological role, catalyzes three successive oxidations of the 4-methyl group of ent-kaurene giving kaurenoic acid, a key step in gibberellin (GA) biosynthesis. In Fusarium fujikuroi (Bakanae and foot rot disease fungus), this protein is Ent-kaurene oxidase (CYP503A1).